The sequence spans 391 residues: Saxitoxin and tetrodotoxin-binding protein 2 (391 aa).

Positions 1-20 (MGAVPGVVLLLMLAVLGIRA) are cleaved as a signal peptide. Tandem repeats lie at residues 24–202 (PEEC…HKKS) and 203–391 (PEEC…PEQD). N-linked (GlcNAc...) asparagine glycosylation is found at Asn-41, Asn-54, Asn-63, Asn-97, Asn-234, Asn-268, Asn-277, and Asn-307.

As to quaternary structure, homodimer or heterodimer of PSTBP1 and PSTBP2. Glycosylated.

The protein resides in the secreted. In terms of biological role, binds both saxitoxin and tetradotoxin. May play a role in toxin accumulation and/or excretion. The sequence is that of Saxitoxin and tetrodotoxin-binding protein 2 (psbp2) from Takifugu pardalis (Panther puffer).